The following is a 374-amino-acid chain: tRNA-specific 2-thiouridylase MnmA (374 aa).

Residues G17–S24 and M43 contribute to the ATP site. Residues N103–D105 are interaction with target base in tRNA. The active-site Nucleophile is C108. Cysteines 108 and 204 form a disulfide. G132 lines the ATP pocket. The tract at residues K154–Q156 is interaction with tRNA. C204 (cysteine persulfide intermediate) is an active-site residue. The interval R316–Y317 is interaction with tRNA.

It belongs to the MnmA/TRMU family.

The protein resides in the cytoplasm. It catalyses the reaction S-sulfanyl-L-cysteinyl-[protein] + uridine(34) in tRNA + AH2 + ATP = 2-thiouridine(34) in tRNA + L-cysteinyl-[protein] + A + AMP + diphosphate + H(+). Catalyzes the 2-thiolation of uridine at the wobble position (U34) of tRNA, leading to the formation of s(2)U34. The protein is tRNA-specific 2-thiouridylase MnmA of Pseudomonas fluorescens (strain SBW25).